A 331-amino-acid polypeptide reads, in one-letter code: Adenosine deaminase (331 aa).

Zn(2+) contacts are provided by histidine 12 and histidine 14. Substrate contacts are provided by histidine 14, aspartate 16, and glycine 170. Histidine 197 provides a ligand contact to Zn(2+). The Proton donor role is filled by glutamate 200. Aspartate 278 serves as a coordination point for Zn(2+).

Belongs to the metallo-dependent hydrolases superfamily. Adenosine and AMP deaminases family. Adenosine deaminase subfamily. Requires Zn(2+) as cofactor.

It catalyses the reaction adenosine + H2O + H(+) = inosine + NH4(+). The catalysed reaction is 2'-deoxyadenosine + H2O + H(+) = 2'-deoxyinosine + NH4(+). Its function is as follows. Catalyzes the hydrolytic deamination of adenosine and 2-deoxyadenosine. The polypeptide is Adenosine deaminase (Clostridium botulinum (strain 657 / Type Ba4)).